Reading from the N-terminus, the 769-residue chain is Scarecrow-like protein 14 (769 aa).

Disordered regions lie at residues 1–23 (MGSYPDGFPGSMDELDFNKDFDL), 128–157 (PSSSSASSVDHPERLASDSPDGSCSGGAFS), 279–320 (TEKK…ERSN), and 364–388 (TAQSNGAKIRGKKSTSTSHSNDSKK). The GRAS domain occupies 384-765 (NDSKKETADL…RIVYASSLWV (382 aa)). Positions 391 to 451 (ADLRTLLVLC…EARLAGTGTQ (61 aa)) are leucine repeat I (LRI). The tract at residues 470–536 (YQTYMSVCPF…GGSPKLRITG (67 aa)) is VHIID. Positions 501 to 505 (IHIID) match the VHIID motif. The segment at 552-584 (ETGHRLARYCQRHNVPFEYNAIAQKWETIQVED) is leucine repeat II (LRII). The tract at residues 593–687 (VVVNSLFRFR…KEFYGREIVN (95 aa)) is PFYRE. Residues 690–765 (ACEGTERVER…RIVYASSLWV (76 aa)) form an SAW region.

It belongs to the GRAS family. Expressed in roots, shoots, flowers and siliques.

The protein localises to the nucleus. Probable transcription factor involved in plant development. The sequence is that of Scarecrow-like protein 14 (SCL14) from Arabidopsis thaliana (Mouse-ear cress).